The primary structure comprises 180 residues: MVRESIPKEGENIKIQSYKHDGKIHRVWSETTILKGTDHVVIGGNDHTLVTESDGRTWITREPAIVYFHSEYWFNVICMFREDGIYYYCNLSSPFVCDEEALKYIDYDLDIKVYPNGKYHLLDEDEYEQHMNQMNYPHDIDIILRRNVDILQQWIEQKKGPFAPDFIKVWNERYKKIRQY.

The active-site Proton donor is arginine 26. Residues asparagine 90, aspartate 106, aspartate 108, aspartate 110, aspartate 123, and glutamate 126 each coordinate Mg(2+).

This sequence belongs to the Ntdp family. The cofactor is Mg(2+).

It carries out the reaction a ribonucleoside 5'-triphosphate + H2O = a ribonucleoside 5'-diphosphate + phosphate + H(+). The catalysed reaction is a ribonucleoside 5'-diphosphate + H2O = a ribonucleoside 5'-phosphate + phosphate + H(+). Its function is as follows. Has nucleoside phosphatase activity towards nucleoside triphosphates and nucleoside diphosphates. The protein is Nucleoside triphosphate/diphosphate phosphatase of Staphylococcus aureus (strain MSSA476).